Consider the following 425-residue polypeptide: Serine--tRNA ligase (425 aa).

231–233 (TAE) is a binding site for L-serine. 262–264 (RSE) serves as a coordination point for ATP. Glu-285 is a binding site for L-serine. 349 to 352 (EISS) contacts ATP. L-serine is bound at residue Ser-385.

It belongs to the class-II aminoacyl-tRNA synthetase family. Type-1 seryl-tRNA synthetase subfamily. In terms of assembly, homodimer. The tRNA molecule binds across the dimer.

Its subcellular location is the cytoplasm. It carries out the reaction tRNA(Ser) + L-serine + ATP = L-seryl-tRNA(Ser) + AMP + diphosphate + H(+). It catalyses the reaction tRNA(Sec) + L-serine + ATP = L-seryl-tRNA(Sec) + AMP + diphosphate + H(+). It participates in aminoacyl-tRNA biosynthesis; selenocysteinyl-tRNA(Sec) biosynthesis; L-seryl-tRNA(Sec) from L-serine and tRNA(Sec): step 1/1. Its function is as follows. Catalyzes the attachment of serine to tRNA(Ser). Is also able to aminoacylate tRNA(Sec) with serine, to form the misacylated tRNA L-seryl-tRNA(Sec), which will be further converted into selenocysteinyl-tRNA(Sec). This is Serine--tRNA ligase from Maricaulis maris (strain MCS10) (Caulobacter maris).